The sequence spans 601 residues: MKMNRILLLLLTFSSAIHSPLHGESLVCQNALKDLSFLEHLLQVKYAPKTWKEQYLGWDLSKSSVFAEQKLRSEDNPSTSFCQQVIADFIGALSDFHAGVSFFAVESAYLPYSVQKSSDGRFYFVDVMTFSSDIRVGDELLEVDGQPVAEALATLYGTNHKGTLAEESAALRTLFSRMASLGHKVPSGRITLKVRRSSGSVKDVRAKWRYTPESVGDLATIAPSIKAPQLQKSMRGAFPKKESVFHQSSTLFYSPMVPHFWSEFRNHYATSGLKSGYNIGDTDGFFPVMGPVIWESDGIFHAYIFPLVDENGRSHNVGFIRIPTYGWQEMEDLDSIGTPPWEEFGKIITLFSEKTEALIIDQTNNPGGSVMYLYGLLSMLTDKPLDLPKHRMILTQDEVVDALDWLNLLENVDTNAEARIALGDNMEGYPIDLQAAEYLKSFAHQVLACWKNGDIELSTPIPLFGFEKIHPHPRVQYTKPICVLINEQDFSCADFFPAILKDNDRALVVGTRTAGAGGFVFNVQFPNRTGIKSCSLTGSLAVREHGDLIENVGVEPHIEIPFTANDIRYRGYSEYIQKVQKLVAQLINNDSVIILSEDGSF.

This sequence belongs to the chlamydial CPn_1016/CT_858/TC_0248 family.

This is an uncharacterized protein from Chlamydia muridarum (strain MoPn / Nigg).